Here is a 166-residue protein sequence, read N- to C-terminus: MAAAPAGVGRLEEEALRRKERLKALREKTGRKDREDGEPQTKQLREEGEEVGKHRGLRLRNYVPEDEDLKRRRVPQAKPVAVEEKVKEQLEAAKPEPVIEEVDLANLAPRKPDWDLKRDVAKKLEKLEKRTQRAIAELIRERLKGQEDSLASAVDATTGQEACDSD.

N-acetylmethionine is present on Met-1. Residues 8 to 28 (VGRLEEEALRRKERLKALREK) are a coiled coil. Basic and acidic residues predominate over residues 21 to 53 (RLKALREKTGRKDREDGEPQTKQLREEGEEVGK). Residues 21 to 55 (RLKALREKTGRKDREDGEPQTKQLREEGEEVGKHR) are disordered. The residue at position 53 (Lys-53) is an N6-acetyllysine. A Glycyl lysine isopeptide (Lys-Gly) (interchain with G-Cter in SUMO2) cross-link involves residue Lys-94. Residues 115-144 (DLKRDVAKKLEKLEKRTQRAIAELIRERLK) adopt a coiled-coil conformation. The segment at 146–166 (QEDSLASAVDATTGQEACDSD) is disordered. Ser-149 and Ser-165 each carry phosphoserine.

The polypeptide is Coiled-coil domain-containing protein 12 (Ccdc12) (Mus musculus (Mouse)).